Reading from the N-terminus, the 558-residue chain is Potassium-transporting ATPase potassium-binding subunit (558 aa).

Helical transmembrane passes span 1-21 (MSIV…SRYL), 60-80 (IKHF…LLLI), 129-149 (VITF…IAML), 169-189 (FIVR…ISQG), 246-266 (WSNY…VFLF), 281-301 (IMIF…CLYF), 326-346 (FGIG…TGTV), 353-373 (LTPL…VFGG), 376-396 (VGLM…SLMI), 415-435 (IALS…LAFI), 485-505 (IVML…VSSL), and 523-543 (LFFS…TFLP).

This sequence belongs to the KdpA family. The system is composed of three essential subunits: KdpA, KdpB and KdpC.

Its subcellular location is the cell membrane. Part of the high-affinity ATP-driven potassium transport (or Kdp) system, which catalyzes the hydrolysis of ATP coupled with the electrogenic transport of potassium into the cytoplasm. This subunit binds the extracellular potassium ions and delivers the ions to the membrane domain of KdpB through an intramembrane tunnel. The polypeptide is Potassium-transporting ATPase potassium-binding subunit (Staphylococcus haemolyticus (strain JCSC1435)).